The sequence spans 1031 residues: Caprin-2 (1031 aa).

Disordered stretches follow at residues 1 to 27, 364 to 458, 500 to 520, 605 to 658, and 830 to 876; these read MKSAKSQVNQDQQGENQRALSPLQSTL, LQEE…SWEN, PKDVPKPLPQPIDSSSALPKD, DQAS…SSEA, and RSGT…SMTP. 2 stretches are compositionally biased toward polar residues: residues 425–439 and 446–458; these read VSVQSEQSGSRSWTT and ASVQPGTPVSWEN. Residues 608 to 646 are compositionally biased toward low complexity; that stretch reads SSGSETEFTTSETPEMVVSPCKPKPASALASPNPPLSKS. Residues 830–853 show a composition bias toward polar residues; the sequence is RSGTSSGLQANSRAGWSDSSQVSS. Phosphoserine occurs at positions 852 and 853. The C1q domain occupies 897–1031; sequence PQQMRVAFSA…TFSGYLLYQD (135 aa). 2 residues coordinate Ca(2+): aspartate 982 and glutamate 988.

It belongs to the caprin family. As to quaternary structure, homotrimer; via C1q domain. Found in a complex with LRP6, CCNY and CDK14 during G2/M stage; CAPRIN2 functions as a scaffold for the complex by binding to CCNY via its N terminus and to CDK14 via its C terminus. Interacts with LRP5. Interacts with LRP6. As to expression, specifically expressed in brain (at protein level).

The protein resides in the cytoplasm. It localises to the cell membrane. In terms of biological role, promotes phosphorylation of the Wnt coreceptor LRP6, leading to increased activity of the canonical Wnt signaling pathway. Facilitates constitutive LRP6 phosphorylation by CDK14/CCNY during G2/M stage of the cell cycle, which may potentiate cells for Wnt signaling. May regulate the transport and translation of mRNAs, modulating for instance the expression of proteins involved in synaptic plasticity in neurons. Involved in regulation of growth as erythroblasts shift from a highly proliferative state towards their terminal phase of differentiation. May be involved in apoptosis. This is Caprin-2 from Mus musculus (Mouse).